Here is a 173-residue protein sequence, read N- to C-terminus: Alpha-crystallin A chain (173 aa).

N-acetylmethionine is present on Met1. Positions Met1–Glu63 are required for complex formation with BFSP1 and BFSP2. Gln6 carries the post-translational modification Deamidated glutamine; partial. The residue at position 45 (Ser45) is a Phosphoserine. Gln50 bears the Deamidated glutamine; partial mark. Residues Leu52–Ser162 enclose the sHSP domain. Lys70 is modified (N6-acetyllysine). Deamidated glutamine; partial is present on Gln90. Lys99 carries the N6-acetyllysine modification. Residue His100 participates in Zn(2+) binding. Deamidated asparagine; partial is present on Asn101. Zn(2+) is bound by residues Glu102 and His107. A Phosphoserine modification is found at Ser122. A Deamidated asparagine; partial modification is found at Asn123. A disordered region spans residues Pro144–Ser173. Residues Gly153–Pro167 are compositionally biased toward basic and acidic residues. His154 provides a ligand contact to Zn(2+). O-linked (GlcNAc) serine glycosylation occurs at Ser162.

It belongs to the small heat shock protein (HSP20) family. Heteromer composed of three CRYAA and one CRYAB subunits. Inter-subunit bridging via zinc ions enhances stability, which is crucial as there is no protein turn over in the lens. Can also form homodimers and homotetramers (dimers of dimers) which serve as the building blocks of homooligomers. Within homooligomers, the zinc-binding motif is created from residues of 3 different molecules. His-100 and Glu-102 from one molecule are ligands of the zinc ion, and His-107 and His-154 residues from additional molecules complete the site with tetrahedral coordination geometry. Part of a complex required for lens intermediate filament formation composed of BFSP1, BFSP2 and CRYAA. Post-translationally, acetylation at Lys-70 may increase chaperone activity. Undergoes age-dependent proteolytical cleavage at the C-terminus.

The protein localises to the cytoplasm. It is found in the nucleus. Its function is as follows. Contributes to the transparency and refractive index of the lens. Acts as a chaperone, preventing aggregation of various proteins under a wide range of stress conditions. Required for the correct formation of lens intermediate filaments as part of a complex composed of BFSP1, BFSP2 and CRYAA. The chain is Alpha-crystallin A chain (CRYAA) from Giraffa camelopardalis (Giraffe).